Reading from the N-terminus, the 696-residue chain is C2 domain-containing protein 2 (696 aa).

Residues 13–33 (AQWLALVSLFVAALATVGLYL) form a helical membrane-spanning segment. The 192-residue stretch at 51-242 (EPGEGPRPGS…PTTVKEAQNL (192 aa)) folds into the SMP-LBD domain. At S60 the chain carries Phosphoserine. The C2 domain occupies 245–362 (AASTAQESCP…KKQPSGPQSF (118 aa)). A phosphoserine mark is found at S435 and S441. T445 carries the post-translational modification Phosphothreonine. Residues 539 to 580 (VDSTHQEDAPSHPERAAASAPPEEAESAQASLAPKPQEDELD) form a disordered region. Residues 542–553 (THQEDAPSHPER) show a composition bias toward basic and acidic residues. The segment covering 554-572 (AAASAPPEEAESAQASLAP) has biased composition (low complexity). S581 carries the phosphoserine modification.

It localises to the membrane. This is C2 domain-containing protein 2 (C2CD2) from Homo sapiens (Human).